The primary structure comprises 628 residues: 1-deoxy-D-xylulose-5-phosphate synthase (628 aa).

Residues H72 and 113-115 (GHS) contribute to the thiamine diphosphate site. D144 lines the Mg(2+) pocket. Residues 145–146 (GA), N173, Y284, and E366 each bind thiamine diphosphate. Residue N173 coordinates Mg(2+).

This sequence belongs to the transketolase family. DXPS subfamily. In terms of assembly, homodimer. It depends on Mg(2+) as a cofactor. Thiamine diphosphate is required as a cofactor.

The enzyme catalyses D-glyceraldehyde 3-phosphate + pyruvate + H(+) = 1-deoxy-D-xylulose 5-phosphate + CO2. It participates in metabolic intermediate biosynthesis; 1-deoxy-D-xylulose 5-phosphate biosynthesis; 1-deoxy-D-xylulose 5-phosphate from D-glyceraldehyde 3-phosphate and pyruvate: step 1/1. Its function is as follows. Catalyzes the acyloin condensation reaction between C atoms 2 and 3 of pyruvate and glyceraldehyde 3-phosphate to yield 1-deoxy-D-xylulose-5-phosphate (DXP). This chain is 1-deoxy-D-xylulose-5-phosphate synthase, found in Shouchella clausii (strain KSM-K16) (Alkalihalobacillus clausii).